A 479-amino-acid chain; its full sequence is 5-hydroxytryptamine receptor 2B (479 aa).

The Extracellular portion of the chain corresponds to 1-55 (MASSYKMSEQSTTSEHILQKTCDHLILTNRSGLETDSVAEEMKQTVEGQGHTVHW). The N-linked (GlcNAc...) asparagine glycan is linked to N29. The helical transmembrane segment at 56 to 78 (AALLILAVIIPTIGGNILVILAV) threads the bilayer. At 79 to 89 (ALEKRLQYATN) the chain is on the cytoplasmic side. Residues 90-112 (YFLMSLAIADLLVGLFVMPIALL) traverse the membrane as a helical segment. At 113–128 (TIMFEAIWPLPLALCP) the chain is on the extracellular side. Residues C127 and C206 are joined by a disulfide bond. The helical transmembrane segment at 129 to 150 (AWLFLDVLFSTASIMHLCAISL) threads the bilayer. 2 residues coordinate ergotamine: D134 and T139. The DRY motif; important for ligand-induced conformation changes motif lies at 151-153 (DRY). Topologically, residues 151–170 (DRYIAIKKPIQANQCNSRAT) are cytoplasmic. A helical transmembrane segment spans residues 171–191 (AFIKITVVWLISIGIAIPVPI). Topologically, residues 192 to 215 (KGIETDVINPHNVTCELTKDRFGS) are extracellular. L208 contributes to the ergotamine binding site. Positions 211 to 214 (DRFG) match the [DE]RFG motif; may stabilize a conformation that preferentially activates signaling via beta-arrestin family members motif. A helical transmembrane segment spans residues 216–238 (FMVFGSLAAFFAPLTIMVVTYFL). Topologically, residues 239–323 (TIHTLQKKAY…TISNEQRASK (85 aa)) are cytoplasmic. Residues 324-344 (ALGVVFFLFLLMWCPFFITNL) form a helical membrane-spanning segment. The Extracellular segment spans residues 345–359 (TLALCDSCNQTTLKT). A disulfide bond links C349 and C352. A helical membrane pass occupies residues 360–381 (LLEIFVWIGYVSSGVNPLIYTL). The short motif at 375-379 (NPLIY) is the NPxxY motif; important for ligand-induced conformation changes and signaling element. The Cytoplasmic segment spans residues 382-479 (FNKTFREAFG…DKAEEQVSYI (98 aa)). C396 carries S-palmitoyl cysteine lipidation. Residues 477 to 479 (SYI) carry the PDZ-binding motif.

It belongs to the G-protein coupled receptor 1 family. As to quaternary structure, interacts (via C-terminus) with MPDZ. In terms of tissue distribution, ubiquitous. Detected in intestine, heart, skeletal muscle, testis, urinary bladder, stomach, liver, lung, brain and kidney. Detected in osteoblasts. Detected in the raphe nucleus in the brain, in dorsal root ganglion neurons, the brain stem, cerebellum and spinal cord. Detected in interstitial cells of Cajal in the small intestine.

The protein localises to the cell membrane. It is found in the synapse. The protein resides in the synaptosome. G-protein coupled receptor for 5-hydroxytryptamine (serotonin). Also functions as a receptor for various ergot alkaloid derivatives and psychoactive substances. Ligand binding causes a conformation change that triggers signaling via guanine nucleotide-binding proteins (G proteins) and modulates the activity of downstream effectors. HTR2B is coupled to G(q)/G(11) G alpha proteins and activates phospholipase C-beta, releasing diacylglycerol (DAG) and inositol 1,4,5-trisphosphate (IP3) second messengers that modulate the activity of phosphatidylinositol 3-kinase and promote the release of Ca(2+) ions from intracellular stores, respectively. Beta-arrestin family members inhibit signaling via G proteins and mediate activation of alternative signaling pathways. Plays a role in the regulation of dopamine and 5-hydroxytryptamine release, 5-hydroxytryptamine uptake and in the regulation of extracellular dopamine and 5-hydroxytryptamine levels, and thereby affects neural activity. May play a role in the perception of pain. Plays a role in the regulation of behavior, including impulsive behavior. Required for normal proliferation of embryonic cardiac myocytes and normal heart development. Protects cardiomyocytes against apoptosis. Plays a role in the adaptation of pulmonary arteries to chronic hypoxia. Plays a role in vasoconstriction. Required for normal osteoblast function and proliferation, and for maintaining normal bone density. Required for normal proliferation of the interstitial cells of Cajal in the intestine. The polypeptide is 5-hydroxytryptamine receptor 2B (Htr2b) (Mus musculus (Mouse)).